The following is a 351-amino-acid chain: uncharacterized protein (351 aa).

The disordered stretch occupies residues 1–61 (MNDKRKPSFQ…RDKQEVKETR (61 aa)). Composition is skewed to basic and acidic residues over residues 16 to 38 (FQERSVGEKYREKPTQNRPHFND) and 44 to 61 (RNEKSRFPRDKQEVKETR).

It belongs to the class IV-like SAM-binding methyltransferase superfamily. RNA methyltransferase TrmH family.

This is an uncharacterized protein from Haemophilus influenzae (strain ATCC 51907 / DSM 11121 / KW20 / Rd).